The primary structure comprises 297 residues: Formiminotransferase cyclodeaminase-like protein (297 aa).

Residues 2-196 (LREMLGCCKV…GVVAVGACGW (195 aa)) form a formiminotransferase N-subdomain region. H89 (for formimidoyltransferase activity) is an active-site residue. 178-187 (GPQEVSKAKG) contacts folate.

Belongs to the formiminotransferase family. In terms of tissue distribution, expressed constitutively in roots, stems, leaves and flowers.

The protein resides in the golgi apparatus. Its subcellular location is the trans-Golgi network. It catalyses the reaction (6S)-5-formyl-5,6,7,8-tetrahydrofolate + L-glutamate = N-formyl-L-glutamate + (6S)-5,6,7,8-tetrahydrofolate + H(+). It carries out the reaction 5-formimidoyltetrahydrofolate + L-glutamate = N-formimidoyl-L-glutamate + (6S)-5,6,7,8-tetrahydrofolate. It functions in the pathway one-carbon metabolism; tetrahydrofolate interconversion. Its function is as follows. Involved in the regulation of root growth. May regulate sorting and/or transportation of trans-Golgi network (TGN) vesicles in root cap peripheral cells, thus influencing the extracellular secretion of mucilage components in the root cap. This Arabidopsis thaliana (Mouse-ear cress) protein is Formiminotransferase cyclodeaminase-like protein.